The following is a 194-amino-acid chain: UPF0215 protein DR_A0167 (194 aa).

Belongs to the UPF0215 family.

The sequence is that of UPF0215 protein DR_A0167 from Deinococcus radiodurans (strain ATCC 13939 / DSM 20539 / JCM 16871 / CCUG 27074 / LMG 4051 / NBRC 15346 / NCIMB 9279 / VKM B-1422 / R1).